Here is an 831-residue protein sequence, read N- to C-terminus: Phosphoinositide phosphatase SAC4 (831 aa).

An SAC domain is found at 162-551 (LCMVDLTKDF…GDTLAYQYGG (390 aa)). The interval 439 to 475 (SDADTSPHNSSDDDSRDYDSLEKNCRPSKNVANGDYD) is disordered. Over residues 448–463 (SSDDDSRDYDSLEKNC) the composition is skewed to basic and acidic residues. The Phosphatase catalytic core signature appears at 487–498 (RTNCIDCLDRTN). The interval 785–805 (PAMRESGSSSRKGKEPVETEL) is disordered. The span at 796–805 (KGKEPVETEL) shows a compositional bias: basic and acidic residues.

In terms of assembly, component of the PI(3,5)P2 regulatory complex at least composed of ATG18, SAC/FIG4, FAB1 and VAC14. Mg(2+) serves as cofactor. In terms of tissue distribution, ubiquitous with a higher level of expression in young seedlings than in other tissues.

The protein localises to the vacuole membrane. It catalyses the reaction a 1,2-diacyl-sn-glycero-3-phospho-(1D-myo-inositol-3,5-bisphosphate) + H2O = a 1,2-diacyl-sn-glycero-3-phospho-(1D-myo-inositol-3-phosphate) + phosphate. In terms of biological role, the PI(3,5)P2 regulatory complex regulates both the synthesis and turnover of phosphatidylinositol 3,5-bisphosphate (PtdIns(3,5)P2). This is Phosphoinositide phosphatase SAC4 (SAC4) from Arabidopsis thaliana (Mouse-ear cress).